A 53-amino-acid polypeptide reads, in one-letter code: Large ribosomal subunit protein eL24 (53 aa).

Residues C4, C7, C30, and C34 each coordinate Zn(2+). The segment at 4–34 (CSFCNKEIEEGTGKMYVKKDGSIYFFCSSKC) adopts a C4-type zinc-finger fold.

Belongs to the eukaryotic ribosomal protein eL24 family. In terms of assembly, part of the 50S ribosomal subunit. Forms a cluster with proteins L3 and L14. Zn(2+) is required as a cofactor.

Its function is as follows. Binds to the 23S rRNA. In Methanobrevibacter smithii (strain ATCC 35061 / DSM 861 / OCM 144 / PS), this protein is Large ribosomal subunit protein eL24.